The chain runs to 463 residues: MEKPSREAFEGNNKLLIGIVLSVITFWLFAQSLVNVVPILEDSFNTDIGTVNIAVSITALFSGMFVVGAGGLADKYGRIKLTNIGIILNILGSLLIIISNIPLLLIIGRLIQGLSAACIMPATLSIIKSYYIGKDRQRALSYWSIGSWGGSGVCSFFGGAVATLLGWRWIFILSIIISLIALFLIKGTPETKSKSISLNKFDIKGLVLLVIMLLSLNILITKGSELGVTSLLFITLLAIAIGSFSLFIVLEKRATNPLIDFKLFKNKAYTGATASNFLLNGVAGTLIVANTFVQRGLGYSSLQAGSLSITYLVMVLIMIRVGEKLLQTLGCKKPMLIGTGVLIVGECLISLTFLPEIFYVICCIIGYLFFGLGLGIYATPSTDTAIANAPLEKVGVAAGIYKMASALGGAFGVALSGAVYAIVSNMTNIYTGAMIALWLNAGMGILSFVIILLLVPKQNDTQL.

14 consecutive transmembrane segments (helical) span residues 17 to 37, 53 to 73, 86 to 106, 107 to 127, 142 to 162, 165 to 185, 201 to 221, 230 to 250, 273 to 293, 299 to 319, 334 to 354, 357 to 377, 403 to 423, and 435 to 455; these read IGIV…VNVV, IAVS…GGLA, IILN…LLLI, IGRL…LSII, YWSI…GAVA, LGWR…LFLI, FDIK…ILIT, SLLF…FIVL, TASN…NTFV, YSSL…LIMI, PMLI…LTFL, IFYV…LGIY, MASA…YAIV, and IALW…LLLV.

It belongs to the major facilitator superfamily. TCR/Tet family.

Its subcellular location is the cell membrane. In terms of biological role, multidrug efflux pump that acts independently of NorA and is one of the factors that confers resistance against diverse quinolones and chemical compounds. This is Quinolone resistance protein NorB (norB) from Staphylococcus aureus (strain USA300).